The sequence spans 374 residues: Cyclin-D (374 aa).

The protein belongs to the cyclin family. Cyclin D subfamily.

The sequence is that of Cyclin-D (CycD) from Ostreococcus tauri.